The primary structure comprises 129 residues: Small ribosomal subunit protein uS11 (129 aa).

The protein belongs to the universal ribosomal protein uS11 family. In terms of assembly, part of the 30S ribosomal subunit. Interacts with proteins S7 and S18. Binds to IF-3.

Located on the platform of the 30S subunit, it bridges several disparate RNA helices of the 16S rRNA. Forms part of the Shine-Dalgarno cleft in the 70S ribosome. This Bacillus mycoides (strain KBAB4) (Bacillus weihenstephanensis) protein is Small ribosomal subunit protein uS11.